A 215-amino-acid polypeptide reads, in one-letter code: MTQTLADMRRDYTRDGLTEAQSPDEPFALFHTWFDDAVKTEQPPVEANAMTLATVDEQGRPHCRVLLLKGLDTQGFTFFTNYESAKGQQLAARPFAAMTFFWPTLERQVRIEGRVEKVSAQESDAYYQVRPLGSRLGAWASPQSRVIADRDELEGLIRQTEQRFADTQPHCPEHWGGYRLLPERIEFWQGRSSRLHDRLNYRSVDGRWTRERLAP.

Residues 9 to 12 (RRDY) and lysine 69 each bind substrate. FMN contacts are provided by residues 64–69 (RVLLLK), 79–80 (FT), lysine 86, and glutamine 108. Residues tyrosine 126, arginine 130, and serine 134 each contribute to the substrate site. FMN is bound by residues 143–144 (QS) and tryptophan 188. Residue 194-196 (RLH) participates in substrate binding. Arginine 198 is an FMN binding site.

Belongs to the pyridoxamine 5'-phosphate oxidase family. As to quaternary structure, homodimer. Requires FMN as cofactor.

The catalysed reaction is pyridoxamine 5'-phosphate + O2 + H2O = pyridoxal 5'-phosphate + H2O2 + NH4(+). It catalyses the reaction pyridoxine 5'-phosphate + O2 = pyridoxal 5'-phosphate + H2O2. Its pathway is cofactor metabolism; pyridoxal 5'-phosphate salvage; pyridoxal 5'-phosphate from pyridoxamine 5'-phosphate: step 1/1. The protein operates within cofactor metabolism; pyridoxal 5'-phosphate salvage; pyridoxal 5'-phosphate from pyridoxine 5'-phosphate: step 1/1. Its function is as follows. Catalyzes the oxidation of either pyridoxine 5'-phosphate (PNP) or pyridoxamine 5'-phosphate (PMP) into pyridoxal 5'-phosphate (PLP). This chain is Pyridoxine/pyridoxamine 5'-phosphate oxidase, found in Pseudomonas savastanoi pv. phaseolicola (strain 1448A / Race 6) (Pseudomonas syringae pv. phaseolicola (strain 1448A / Race 6)).